A 240-amino-acid chain; its full sequence is UDP-2,3-diacylglucosamine hydrolase (240 aa).

Positions 8, 10, 41, 78, and 113 each coordinate Mn(2+). 78-79 is a binding site for substrate; the sequence is NR. D121, S159, N163, K166, and H194 together coordinate substrate. Residues H194 and H196 each coordinate Mn(2+).

The protein belongs to the LpxH family. Requires Mn(2+) as cofactor.

It is found in the cell inner membrane. The catalysed reaction is UDP-2-N,3-O-bis[(3R)-3-hydroxytetradecanoyl]-alpha-D-glucosamine + H2O = 2-N,3-O-bis[(3R)-3-hydroxytetradecanoyl]-alpha-D-glucosaminyl 1-phosphate + UMP + 2 H(+). The protein operates within glycolipid biosynthesis; lipid IV(A) biosynthesis; lipid IV(A) from (3R)-3-hydroxytetradecanoyl-[acyl-carrier-protein] and UDP-N-acetyl-alpha-D-glucosamine: step 4/6. Functionally, hydrolyzes the pyrophosphate bond of UDP-2,3-diacylglucosamine to yield 2,3-diacylglucosamine 1-phosphate (lipid X) and UMP by catalyzing the attack of water at the alpha-P atom. Involved in the biosynthesis of lipid A, a phosphorylated glycolipid that anchors the lipopolysaccharide to the outer membrane of the cell. The protein is UDP-2,3-diacylglucosamine hydrolase of Shewanella baltica (strain OS155 / ATCC BAA-1091).